A 791-amino-acid chain; its full sequence is Vezatin (791 aa).

2 consecutive transmembrane segments (helical) span residues 138-158 (IATP…ALAA) and 163-183 (SISS…FTVL). Residues 435–464 (VRSLQLHLKALLNEVIILEDELEKLSSCKE) are a coiled coil. Acidic residues predominate over residues 752–769 (GDEWDDDDDDNDNDDDNY). A disordered region spans residues 752-791 (GDEWDDDDDDNDNDDDNYDQVKNVESHEKERNNVSLQLEE). Positions 773-783 (KNVESHEKERN) are enriched in basic and acidic residues.

Belongs to the vezatin family. Interacts with myosin VIIa and the cadherin-catenins complex.

The protein resides in the cell membrane. It localises to the cell junction. Its subcellular location is the adherens junction. It is found in the nucleus. In terms of biological role, plays a pivotal role in the establishment of adherens junctions and their maintenance in adult life. This Xenopus tropicalis (Western clawed frog) protein is Vezatin (vezt).